The primary structure comprises 84 residues: Large ribosomal subunit protein bL27 (84 aa).

A disordered region spans residues 1–22 (MAKTKAGGSTKNGRDSAGRRLG).

The protein belongs to the bacterial ribosomal protein bL27 family.

The chain is Large ribosomal subunit protein bL27 from Mesomycoplasma hyopneumoniae (strain 232) (Mycoplasma hyopneumoniae).